A 377-amino-acid chain; its full sequence is MSTPALLVLADGSVFHGTSIGYEGSTSGEVVFNTSMTGYQEILTDPSYCKQIVTLTYPHIGNTGTNAEDEESRSVYAAGLIIRDLPLLHSNFRASESLHDYLVRNKTVAIADIDTRRLTTLLREKGAQGGAILTGADATIEKAQELIAAFGSMVGKDLAKEVSCTETYEWTEGEWALGKGFVTPDEQPYHVVAYDFGVKTNILRMLASRGCRLTVVPAQTSAEDVLALNPDGVFLSNGPGDPEPCTYAIKAVQKLIESGKPIFGICLGHQLISLAIGAKTLKMRFSHHGANHPVQDLDSGKVVITSQNHGFAVDADTLPANARITHKSLFDNTLQGIELTDKPVFCFQGHPEASPGPQDVGYLFDKFIGNMKAAKRA.

The segment at 1–186 (MSTPALLVLA…LGKGFVTPDE (186 aa)) is CPSase. Residues S47, G238, and G240 each contribute to the L-glutamine site. One can recognise a Glutamine amidotransferase type-1 domain in the interval 190-377 (HVVAYDFGVK…IGNMKAAKRA (188 aa)). The active-site Nucleophile is the C266. 5 residues coordinate L-glutamine: L267, Q270, N308, G310, and F311. Catalysis depends on residues H350 and E352.

This sequence belongs to the CarA family. As to quaternary structure, composed of two chains; the small (or glutamine) chain promotes the hydrolysis of glutamine to ammonia, which is used by the large (or ammonia) chain to synthesize carbamoyl phosphate. Tetramer of heterodimers (alpha,beta)4.

The enzyme catalyses hydrogencarbonate + L-glutamine + 2 ATP + H2O = carbamoyl phosphate + L-glutamate + 2 ADP + phosphate + 2 H(+). It catalyses the reaction L-glutamine + H2O = L-glutamate + NH4(+). Its pathway is amino-acid biosynthesis; L-arginine biosynthesis; carbamoyl phosphate from bicarbonate: step 1/1. The protein operates within pyrimidine metabolism; UMP biosynthesis via de novo pathway; (S)-dihydroorotate from bicarbonate: step 1/3. Small subunit of the glutamine-dependent carbamoyl phosphate synthetase (CPSase). CPSase catalyzes the formation of carbamoyl phosphate from the ammonia moiety of glutamine, carbonate, and phosphate donated by ATP, constituting the first step of 2 biosynthetic pathways, one leading to arginine and/or urea and the other to pyrimidine nucleotides. The small subunit (glutamine amidotransferase) binds and cleaves glutamine to supply the large subunit with the substrate ammonia. In Neisseria meningitidis serogroup B (strain ATCC BAA-335 / MC58), this protein is Carbamoyl phosphate synthase small chain.